Here is a 119-residue protein sequence, read N- to C-terminus: Large ribosomal subunit protein uL24 (119 aa).

Belongs to the universal ribosomal protein uL24 family. Part of the 50S ribosomal subunit.

Its function is as follows. One of two assembly initiator proteins, it binds directly to the 5'-end of the 23S rRNA, where it nucleates assembly of the 50S subunit. Functionally, one of the proteins that surrounds the polypeptide exit tunnel on the outside of the subunit. The protein is Large ribosomal subunit protein uL24 of Arthrobacter sp. (strain FB24).